A 458-amino-acid chain; its full sequence is Bifunctional protein GlmU (458 aa).

The pyrophosphorylase stretch occupies residues 1-231; the sequence is MSNRALSVVV…QTEVEGVNNR (231 aa). UDP-N-acetyl-alpha-D-glucosamine-binding positions include 11–14, Lys-25, Gln-78, 83–84, 105–107, Gly-142, Glu-156, Asn-171, and Asn-229; these read LAAG, GT, and YGD. A Mg(2+)-binding site is contributed by Asp-107. Mg(2+) is bound at residue Asn-229. Positions 232 to 252 are linker; it reads LQLARLERLFQREQAERLLLA. Positions 253–458 are N-acetyltransferase; it reads GVMLSDPDRF…ANWTRPVKKK (206 aa). UDP-N-acetyl-alpha-D-glucosamine is bound by residues Arg-335 and Lys-353. His-365 functions as the Proton acceptor in the catalytic mechanism. UDP-N-acetyl-alpha-D-glucosamine-binding residues include Tyr-368 and Asn-379. Residues Ala-382, 388–389, Ser-407, Ala-425, and Arg-442 each bind acetyl-CoA; that span reads NY.

The protein in the N-terminal section; belongs to the N-acetylglucosamine-1-phosphate uridyltransferase family. This sequence in the C-terminal section; belongs to the transferase hexapeptide repeat family. As to quaternary structure, homotrimer. Requires Mg(2+) as cofactor.

The protein localises to the cytoplasm. It catalyses the reaction alpha-D-glucosamine 1-phosphate + acetyl-CoA = N-acetyl-alpha-D-glucosamine 1-phosphate + CoA + H(+). The catalysed reaction is N-acetyl-alpha-D-glucosamine 1-phosphate + UTP + H(+) = UDP-N-acetyl-alpha-D-glucosamine + diphosphate. It participates in nucleotide-sugar biosynthesis; UDP-N-acetyl-alpha-D-glucosamine biosynthesis; N-acetyl-alpha-D-glucosamine 1-phosphate from alpha-D-glucosamine 6-phosphate (route II): step 2/2. It functions in the pathway nucleotide-sugar biosynthesis; UDP-N-acetyl-alpha-D-glucosamine biosynthesis; UDP-N-acetyl-alpha-D-glucosamine from N-acetyl-alpha-D-glucosamine 1-phosphate: step 1/1. The protein operates within bacterial outer membrane biogenesis; LPS lipid A biosynthesis. Functionally, catalyzes the last two sequential reactions in the de novo biosynthetic pathway for UDP-N-acetylglucosamine (UDP-GlcNAc). The C-terminal domain catalyzes the transfer of acetyl group from acetyl coenzyme A to glucosamine-1-phosphate (GlcN-1-P) to produce N-acetylglucosamine-1-phosphate (GlcNAc-1-P), which is converted into UDP-GlcNAc by the transfer of uridine 5-monophosphate (from uridine 5-triphosphate), a reaction catalyzed by the N-terminal domain. The polypeptide is Bifunctional protein GlmU (Sodalis glossinidius (strain morsitans)).